The following is a 300-amino-acid chain: Putative hydro-lyase Dshi_3152 (300 aa).

This sequence belongs to the D-glutamate cyclase family.

The sequence is that of Putative hydro-lyase Dshi_3152 from Dinoroseobacter shibae (strain DSM 16493 / NCIMB 14021 / DFL 12).